Reading from the N-terminus, the 426-residue chain is Gamma-glutamyl phosphate reductase (426 aa).

It belongs to the gamma-glutamyl phosphate reductase family.

Its subcellular location is the cytoplasm. It catalyses the reaction L-glutamate 5-semialdehyde + phosphate + NADP(+) = L-glutamyl 5-phosphate + NADPH + H(+). It functions in the pathway amino-acid biosynthesis; L-proline biosynthesis; L-glutamate 5-semialdehyde from L-glutamate: step 2/2. In terms of biological role, catalyzes the NADPH-dependent reduction of L-glutamate 5-phosphate into L-glutamate 5-semialdehyde and phosphate. The product spontaneously undergoes cyclization to form 1-pyrroline-5-carboxylate. The chain is Gamma-glutamyl phosphate reductase from Sorangium cellulosum (strain So ce56) (Polyangium cellulosum (strain So ce56)).